Reading from the N-terminus, the 657-residue chain is Penicillin-binding protein activator LpoA (657 aa).

The first 25 residues, 1 to 25 (MLSSTFVRSKAGLVPVILAALILAA), serve as a signal peptide directing secretion. Cys-26 is lipidated: N-palmitoyl cysteine. Residue Cys-26 is the site of S-diacylglycerol cysteine attachment.

It belongs to the LpoA family. As to quaternary structure, interacts with PBP1a.

Its subcellular location is the cell outer membrane. Functionally, regulator of peptidoglycan synthesis that is essential for the function of penicillin-binding protein 1A (PBP1a). The sequence is that of Penicillin-binding protein activator LpoA from Yersinia pestis bv. Antiqua (strain Angola).